Consider the following 177-residue polypeptide: Large ribosomal subunit protein uL6 (177 aa).

It belongs to the universal ribosomal protein uL6 family. Part of the 50S ribosomal subunit.

Functionally, this protein binds to the 23S rRNA, and is important in its secondary structure. It is located near the subunit interface in the base of the L7/L12 stalk, and near the tRNA binding site of the peptidyltransferase center. This Sinorhizobium fredii (strain NBRC 101917 / NGR234) protein is Large ribosomal subunit protein uL6.